Here is a 1040-residue protein sequence, read N- to C-terminus: Beta-galactosidase (1040 aa).

Substrate contacts are provided by asparagine 111 and aspartate 210. Residue aspartate 210 coordinates Na(+). The Mg(2+) site is built by glutamate 427, histidine 429, and glutamate 472. Residues glutamate 472 and 548-551 contribute to the substrate site; that span reads EYAH. Catalysis depends on glutamate 472, which acts as the Proton donor. The Nucleophile role is filled by glutamate 548. Mg(2+) is bound at residue asparagine 608. Residues phenylalanine 612 and aspartate 615 each coordinate Na(+). Positions 615 and 1016 each coordinate substrate.

It belongs to the glycosyl hydrolase 2 family. Homotetramer. The cofactor is Mg(2+). Na(+) is required as a cofactor.

It catalyses the reaction Hydrolysis of terminal non-reducing beta-D-galactose residues in beta-D-galactosides.. The protein is Beta-galactosidase of Pectobacterium atrosepticum (strain SCRI 1043 / ATCC BAA-672) (Erwinia carotovora subsp. atroseptica).